The sequence spans 760 residues: Xaa-Pro dipeptidyl-peptidase (760 aa).

Active-site charge relay system residues include Ser349, Asp469, and His499.

Belongs to the peptidase S15 family. In terms of assembly, homodimer.

The protein localises to the cytoplasm. The catalysed reaction is Hydrolyzes Xaa-Pro-|- bonds to release unblocked, N-terminal dipeptides from substrates including Ala-Pro-|-p-nitroanilide and (sequentially) Tyr-Pro-|-Phe-Pro-|-Gly-Pro-|-Ile.. Functionally, removes N-terminal dipeptides sequentially from polypeptides having unsubstituted N-termini provided that the penultimate residue is proline. The protein is Xaa-Pro dipeptidyl-peptidase of Streptococcus pyogenes serotype M49 (strain NZ131).